The following is a 528-amino-acid chain: Carboxysome shell carbonic anhydrase (528 aa).

The disordered stretch occupies residues 17–47; it reads PIAPNPRWQKENPTAHGSTDTGGFGYNGGNE. Residue cysteine 184 coordinates Zn(2+). Aspartate 186 functions as the Proton acceptor in the catalytic mechanism. The Zn(2+) site is built by histidine 252 and cysteine 263.

It belongs to the beta-class carbonic anhydrase family. CsoSCA subfamily. Homodimer. Requires Zn(2+) as cofactor.

It localises to the carboxysome. It catalyses the reaction hydrogencarbonate + H(+) = CO2 + H2O. With respect to regulation, inhibited by ethoxyzolamide and dithiothreitol (in crude extracts upon expression in E.coli). Its function is as follows. Reversible hydration of carbon dioxide. This bacteria encodes at least 3 CA enzymes. Essential for chemolithotrophic carbon dioxide fixation, supplies CO(2) to RuBisCO (ribulose bisphosphate carboxylase, cbbL-cbbS) in the carboxysome. The protein is Carboxysome shell carbonic anhydrase of Hydrogenovibrio crunogenus (strain DSM 25203 / XCL-2) (Thiomicrospira crunogena).